A 251-amino-acid polypeptide reads, in one-letter code: Triosephosphate isomerase (251 aa).

Position 8–10 (8–10) interacts with substrate; sequence NWK. Histidine 97 acts as the Electrophile in catalysis. Glutamate 170 serves as the catalytic Proton acceptor. Residues glycine 176, serine 215, and 236–237 each bind substrate; that span reads GG.

It belongs to the triosephosphate isomerase family. As to quaternary structure, homodimer.

The protein localises to the cytoplasm. It carries out the reaction D-glyceraldehyde 3-phosphate = dihydroxyacetone phosphate. It functions in the pathway carbohydrate biosynthesis; gluconeogenesis. Its pathway is carbohydrate degradation; glycolysis; D-glyceraldehyde 3-phosphate from glycerone phosphate: step 1/1. Involved in the gluconeogenesis. Catalyzes stereospecifically the conversion of dihydroxyacetone phosphate (DHAP) to D-glyceraldehyde-3-phosphate (G3P). The sequence is that of Triosephosphate isomerase from Nitratidesulfovibrio vulgaris (strain DSM 19637 / Miyazaki F) (Desulfovibrio vulgaris).